A 109-amino-acid polypeptide reads, in one-letter code: Flagellar hook-basal body complex protein FliE (109 aa).

Belongs to the FliE family.

It is found in the bacterial flagellum basal body. This Nitrosomonas eutropha (strain DSM 101675 / C91 / Nm57) protein is Flagellar hook-basal body complex protein FliE.